A 612-amino-acid polypeptide reads, in one-letter code: Peroxisomal carnitine O-octanoyltransferase (612 aa).

At Met1 the chain carries N-acetylmethionine. N6-succinyllysine is present on residues Lys40 and Lys57. The Proton acceptor role is filled by His327. Residues Lys406 and 410 to 417 (KNKMLHPD) each bind CoA. N6-acetyllysine; alternate is present on Lys406. Position 406 is an N6-succinyllysine; alternate (Lys406). (R)-carnitine contacts are provided by Tyr439, Thr441, and Thr452. Positions 610–612 (THL) match the Microbody targeting signal motif.

It belongs to the carnitine/choline acetyltransferase family. Monomer.

Its subcellular location is the peroxisome. It carries out the reaction octanoyl-CoA + (R)-carnitine = O-octanoyl-(R)-carnitine + CoA. It catalyses the reaction 4,8-dimethylnonanoyl-CoA + (R)-carnitine = O-4,8-dimethylnonanoyl-(R)-carnitine + CoA. The protein operates within lipid metabolism; fatty acid beta-oxidation. In terms of biological role, beta-oxidation of fatty acids. The highest activity concerns the C6 to C10 chain length substrate. Converts the end product of pristanic acid beta oxidation, 4,8-dimethylnonanoyl-CoA, to its corresponding carnitine ester. This chain is Peroxisomal carnitine O-octanoyltransferase (CROT), found in Homo sapiens (Human).